The chain runs to 469 residues: Reticulon-2 (469 aa).

2 disordered regions span residues Met-1 to Glu-180 and Leu-201 to Gly-238. Over residues Ala-14–Thr-25 the composition is skewed to low complexity. Residues Ser-32 to Phe-43 show a composition bias toward basic and acidic residues. Phosphoserine is present on Ser-44. Residues Arg-135–Leu-144 show a composition bias toward basic and acidic residues. 2 stretches are compositionally biased toward polar residues: residues Asp-159 to Leu-168 and Pro-203 to Asn-226. A Reticulon domain is found at Val-270–Glu-469. 2 helical membrane-spanning segments follow: residues Leu-293–Leu-313 and Leu-388–Leu-408.

In terms of assembly, interacts with SPAST. Interacts with BACE1. Interacts (via first transmembrane domain) with ARL6IP5/GTRAP3-18. Interacts (via N-terminus) with SLC1A1/EAAC1; the interaction promotes cell surface expression of SLC1A1. Expressed in brain and spinal cord (at protein level). In the embryonic brain cortex, expressed in neurons but not in astrocytes (at protein level).

It is found in the endoplasmic reticulum membrane. Its subcellular location is the sarcoplasmic reticulum membrane. The protein resides in the cell membrane. The protein localises to the sarcolemma. It localises to the T-tubule. It is found in the cytoplasm. Its subcellular location is the myofibril. The protein resides in the sarcomere. The protein localises to the z line. It localises to the cytoskeleton. In terms of biological role, inhibits amyloid precursor protein processing, probably by blocking BACE1 activity. Enhances trafficking of the glutamate transporter SLC1A1/EAAC1 from the endoplasmic reticulum to the cell surface. Plays a role in the translocation of SLC2A4/GLUT4 from intracellular membranes to the cell membrane which facilitates the uptake of glucose into the cell. This chain is Reticulon-2, found in Rattus norvegicus (Rat).